The sequence spans 422 residues: Testin (422 aa).

Residues 92 to 199 (MILTNPVPAK…GDVKLPSEMD (108 aa)) enclose the PET domain. Disordered regions lie at residues 135-162 (QPVAGSEGAQYRKKQLAKQLPAHDQDPS) and 194-226 (LPSEMDVKPGDRSSLDGGDRGTTAEVGAVEDKS). Basic and acidic residues predominate over residues 194–212 (LPSEMDVKPGDRSSLDGGD). 3 consecutive LIM zinc-binding domains span residues 234–297 (YSCY…CDSE), 299–359 (PRCA…NHAV), and 362–422 (QGCH…MMMS).

It belongs to the prickle / espinas / testin family. In terms of assembly, interacts via LIM domain 1 with ZYX. Interacts (via LIM domain 3) with ENAH and VASP. Interacts with ALKBH4, talin, actin, alpha-actinin, GRIP1 and PXN. Interacts (via LIM domain 2) with ACTL7A (via N-terminus). Heterodimer with ACTL7A; the heterodimer interacts with ENAH to form a heterotrimer.

The protein localises to the cytoplasm. The protein resides in the cell junction. It localises to the focal adhesion. Its function is as follows. Scaffold protein that may play a role in cell adhesion, cell spreading and in the reorganization of the actin cytoskeleton. Plays a role in the regulation of cell proliferation. May act as a tumor suppressor. This is Testin (TES) from Monodelphis domestica (Gray short-tailed opossum).